The primary structure comprises 142 residues: Cytochrome b5-related protein (142 aa).

Residues 16–100 (PTYRNSAPVT…IAKYKVRDAY (85 aa)) form the Cytochrome b5 heme-binding domain. His-59 and His-82 together coordinate heme.

It belongs to the cytochrome b5 family.

Its function is as follows. May play a role in muscle cell metabolism. This Drosophila virilis (Fruit fly) protein is Cytochrome b5-related protein (Cyt-b5-r).